The chain runs to 197 residues: ATP-dependent Clp protease proteolytic subunit 1 (197 aa).

Ser-100 functions as the Nucleophile in the catalytic mechanism. The active site involves His-125.

This sequence belongs to the peptidase S14 family. As to quaternary structure, fourteen ClpP subunits assemble into 2 heptameric rings which stack back to back to give a disk-like structure with a central cavity, resembling the structure of eukaryotic proteasomes.

Its subcellular location is the cytoplasm. It catalyses the reaction Hydrolysis of proteins to small peptides in the presence of ATP and magnesium. alpha-casein is the usual test substrate. In the absence of ATP, only oligopeptides shorter than five residues are hydrolyzed (such as succinyl-Leu-Tyr-|-NHMec, and Leu-Tyr-Leu-|-Tyr-Trp, in which cleavage of the -Tyr-|-Leu- and -Tyr-|-Trp bonds also occurs).. Its function is as follows. Cleaves peptides in various proteins in a process that requires ATP hydrolysis. Has a chymotrypsin-like activity. Plays a major role in the degradation of misfolded proteins. This Gloeobacter violaceus (strain ATCC 29082 / PCC 7421) protein is ATP-dependent Clp protease proteolytic subunit 1.